Here is a 636-residue protein sequence, read N- to C-terminus: Ligand-gated ion channel 4 (636 aa).

The signal sequence occupies residues 1–25; that stretch reads MVICHSCTTFCILLVIDLVPCRIVG. Over 26-326 the chain is Extracellular; the sequence is MENVENRVMF…IHMHRRPLFY (301 aa). Residues Asn45, Asn141, Asn179, and Asn227 are each glycosylated (N-linked (GlcNAc...) asparagine). An intrachain disulfide couples Cys240 to Cys254. An N-linked (GlcNAc...) asparagine glycan is attached at Asn284. The next 3 membrane-spanning stretches (helical) occupy residues 327–347, 357–377, and 383–403; these read VFNH…GFLM, MIIT…ESIP, and VPLI…ATCV. Topologically, residues 404-602 are cytoplasmic; sequence NVITLNMHRN…QLASVVDRLL (199 aa). A helical membrane pass occupies residues 603 to 623; that stretch reads LCLFCTATLFTIICLLIVPVV.

Belongs to the ligand-gated ion channel (TC 1.A.9) family.

It is found in the postsynaptic cell membrane. Its subcellular location is the cell membrane. Functionally, acetylcholine receptor. The polypeptide is Ligand-gated ion channel 4 (Caenorhabditis briggsae).